The sequence spans 91 residues: Signal recognition particle 19 kDa protein (91 aa).

Belongs to the SRP19 family. As to quaternary structure, part of the signal recognition particle protein translocation system, which is composed of SRP and FtsY. Archaeal SRP consists of a 7S RNA molecule of 300 nucleotides and two protein subunits: SRP54 and SRP19.

Its subcellular location is the cytoplasm. Involved in targeting and insertion of nascent membrane proteins into the cytoplasmic membrane. Binds directly to 7S RNA and mediates binding of the 54 kDa subunit of the SRP. In Methanoregula boonei (strain DSM 21154 / JCM 14090 / 6A8), this protein is Signal recognition particle 19 kDa protein.